The sequence spans 165 residues: Cyclic pyranopterin monophosphate synthase (165 aa).

Substrate contacts are provided by residues phenylalanine 83–histidine 85 and methionine 120–glutamate 121. Residue aspartate 135 is part of the active site.

It belongs to the MoaC family. Homohexamer; trimer of dimers.

It catalyses the reaction (8S)-3',8-cyclo-7,8-dihydroguanosine 5'-triphosphate = cyclic pyranopterin phosphate + diphosphate. It functions in the pathway cofactor biosynthesis; molybdopterin biosynthesis. Functionally, catalyzes the conversion of (8S)-3',8-cyclo-7,8-dihydroguanosine 5'-triphosphate to cyclic pyranopterin monophosphate (cPMP). This is Cyclic pyranopterin monophosphate synthase from Xanthomonas campestris pv. campestris (strain B100).